Reading from the N-terminus, the 54-residue chain is Protein PIGBOS1 (54 aa).

The Mitochondrial intermembrane segment spans residues 1-4; the sequence is MFRR. A helical transmembrane segment spans residues 5–25; sequence LTFAQLLFATVLGIAGGVYIF. Topologically, residues 26 to 54 are cytoplasmic; sequence QPVFEQYAKDQKELKEKMQLVQESEEKKS. Residues 30–36 are required for interaction with CLCC1; the sequence is EQYAKDQ.

In terms of assembly, homooligomer. Interacts (via C-terminus) with endoplasmic reticulum (ER) protein CLCC1; the interaction occurs at the mitochondria-associated ER membrane, a zone of contact between the ER and mitochondrial membranes, but does not appear to play a role in ER-mitochondria tethering and is not affected by ER stress.

Its subcellular location is the mitochondrion outer membrane. Plays a role in regulation of the unfolded protein response triggered by endoplasmic reticulum (ER) stress resulting from the presence of unfolded proteins in the ER lumen. This Homo sapiens (Human) protein is Protein PIGBOS1.